Consider the following 424-residue polypeptide: Inhibin beta A chain (424 aa).

Residues 1–20 (MPLLWLRGFLLASCWIIVRS) form the signal peptide. The propeptide occupies 21–308 (SPTPGSEGHG…EDHPHRRRRR (288 aa)). Asn165 is a glycosylation site (N-linked (GlcNAc...) asparagine). Residues 264 to 275 (EVDGDGKKKDGS) show a composition bias toward basic and acidic residues. A disordered region spans residues 264 to 306 (EVDGDGKKKDGSDGGLEEEKEQSHRPFLMLQARQSEDHPHRRR). Cystine bridges form between Cys312-Cys320, Cys319-Cys389, Cys348-Cys421, and Cys352-Cys423.

The protein belongs to the TGF-beta family. Dimeric, linked by one or more disulfide bonds. Inhibin A is a dimer of alpha/INHA and beta-A/INHBA. Activin A is a homodimer of beta-A/INHBA. Activin AB is a dimer of beta-A/INHBA and beta-B/INHBB. Interacts with FST and FSTL3; these interactions prevent activin A interaction to its type II receptor. Activin A interacts with ACVR2A. Activin A interacts with BMPR2. Inhibin A interacts with ACVR1; this interaction creates a non-signaling complex (NSC) that inhibits ACVR1-mediated BMP signaling. Inhibin A interacts with ACVR2A. Uterus, ovary and liver.

Its subcellular location is the secreted. Inhibins/activins are involved in regulating a number of diverse functions such as hypothalamic and pituitary hormone secretion, gonadal hormone secretion, germ cell development and maturation, erythroid differentiation, insulin secretion, nerve cell survival, embryonic axial development or bone growth, depending on their subunit composition. In terms of biological role, activin A is a homodimer of INHBA that plays a role in several essential biological processes including embryonic development, stem cell maintenance and differentiation, haematopoiesis, cell proliferation and tissue fibrosis. Signals through type I (such as ACVR1B or ACVR1C) and type II receptors (such as ACVR2A, ACVR2B or BMPR2) which, upon ligand binding, phosphorylate SMAD2 and SMAD3 intracellular signaling mediators that form a complex with SMAD4, translocate to the nucleus and modulate gene expression. Can also activate alternative non-canonical intracellular signaling pathways including the p38 MAPK, extracellular signal-regulated kinases 1/2 (ERK1/2) and c-Jun N-terminal kinases (JNKs) to modulate cell migration and differentiation. Alternatively, promotes osteoblastic differentiation via ACVRL1-SMAD1/5/9 pathway. In addition, can engage the type I receptor ACVR1 to form an ACVR1-activin A-type II receptor non-signaling complex (NSC) that renders receptors unavailable for engagement with BMPs, hence resulting in an apparent inhibition of ACVR1-mediated BMP signaling. Functionally, inhibin A is a dimer of alpha/INHA and beta-A/INHBA that functions as a feedback regulator in the hypothalamic-pituitary-gonadal (HPG) axis. Inhibits the secretion of FSH from the anterior pituitary gland by acting on pituitary gonadotrope cells. Antagonizes activin A by binding to the proteoglycan, betaglycan, and forming a stable complex with and, thereby, sequestering type II activin receptors while excluding type I receptor. This chain is Inhibin beta A chain (Inhba), found in Mus musculus (Mouse).